A 179-amino-acid polypeptide reads, in one-letter code: Large ribosomal subunit protein uL10 (179 aa).

Belongs to the universal ribosomal protein uL10 family. As to quaternary structure, part of the ribosomal stalk of the 50S ribosomal subunit. The N-terminus interacts with L11 and the large rRNA to form the base of the stalk. The C-terminus forms an elongated spine to which L12 dimers bind in a sequential fashion forming a multimeric L10(L12)X complex.

Functionally, forms part of the ribosomal stalk, playing a central role in the interaction of the ribosome with GTP-bound translation factors. In Mycolicibacterium gilvum (strain PYR-GCK) (Mycobacterium gilvum (strain PYR-GCK)), this protein is Large ribosomal subunit protein uL10.